We begin with the raw amino-acid sequence, 379 residues long: UDP-4-amino-4-deoxy-L-arabinose--oxoglutarate aminotransferase (379 aa).

Residue K182 is modified to N6-(pyridoxal phosphate)lysine.

The protein belongs to the DegT/DnrJ/EryC1 family. ArnB subfamily. Homodimer. Pyridoxal 5'-phosphate is required as a cofactor.

It catalyses the reaction UDP-4-amino-4-deoxy-beta-L-arabinose + 2-oxoglutarate = UDP-beta-L-threo-pentopyranos-4-ulose + L-glutamate. It participates in nucleotide-sugar biosynthesis; UDP-4-deoxy-4-formamido-beta-L-arabinose biosynthesis; UDP-4-deoxy-4-formamido-beta-L-arabinose from UDP-alpha-D-glucuronate: step 2/3. It functions in the pathway bacterial outer membrane biogenesis; lipopolysaccharide biosynthesis. Catalyzes the conversion of UDP-4-keto-arabinose (UDP-Ara4O) to UDP-4-amino-4-deoxy-L-arabinose (UDP-L-Ara4N). The modified arabinose is attached to lipid A and is required for resistance to polymyxin and cationic antimicrobial peptides. The polypeptide is UDP-4-amino-4-deoxy-L-arabinose--oxoglutarate aminotransferase (Erwinia tasmaniensis (strain DSM 17950 / CFBP 7177 / CIP 109463 / NCPPB 4357 / Et1/99)).